Here is a 93-residue protein sequence, read N- to C-terminus: MEHGEKHITIVDDQGNEQLCEVLFTFENDTFNKSYVLYYPIDAQDDDEIEIHASSFEPNENGEDGELMPIETDEEWEMIEETLNTFLAEEDEE.

The protein belongs to the UPF0473 family.

In Bacillus velezensis (strain DSM 23117 / BGSC 10A6 / LMG 26770 / FZB42) (Bacillus amyloliquefaciens subsp. plantarum), this protein is UPF0473 protein RBAM_024480.